A 345-amino-acid chain; its full sequence is Heat-inducible transcription repressor HrcA (345 aa).

It belongs to the HrcA family.

In terms of biological role, negative regulator of class I heat shock genes (grpE-dnaK-dnaJ and groELS operons). Prevents heat-shock induction of these operons. This chain is Heat-inducible transcription repressor HrcA, found in Listeria monocytogenes serotype 1/2a (strain 10403S).